The sequence spans 692 residues: Elongation factor G (692 aa).

The 275-residue stretch at 8-282 (ERTRNIGIMA…AIVDYLPAPT (275 aa)) folds into the tr-type G domain. Residues 17-24 (AHIDAGKT), 81-85 (DTPGH), and 135-138 (NKMD) each bind GTP.

It belongs to the TRAFAC class translation factor GTPase superfamily. Classic translation factor GTPase family. EF-G/EF-2 subfamily.

It is found in the cytoplasm. Catalyzes the GTP-dependent ribosomal translocation step during translation elongation. During this step, the ribosome changes from the pre-translocational (PRE) to the post-translocational (POST) state as the newly formed A-site-bound peptidyl-tRNA and P-site-bound deacylated tRNA move to the P and E sites, respectively. Catalyzes the coordinated movement of the two tRNA molecules, the mRNA and conformational changes in the ribosome. The sequence is that of Elongation factor G from Desulforamulus reducens (strain ATCC BAA-1160 / DSM 100696 / MI-1) (Desulfotomaculum reducens).